Consider the following 345-residue polypeptide: Histidinol-phosphate aminotransferase (345 aa).

An N6-(pyridoxal phosphate)lysine modification is found at Lys-206.

It belongs to the class-II pyridoxal-phosphate-dependent aminotransferase family. Histidinol-phosphate aminotransferase subfamily. In terms of assembly, homodimer. It depends on pyridoxal 5'-phosphate as a cofactor.

It carries out the reaction L-histidinol phosphate + 2-oxoglutarate = 3-(imidazol-4-yl)-2-oxopropyl phosphate + L-glutamate. Its pathway is amino-acid biosynthesis; L-histidine biosynthesis; L-histidine from 5-phospho-alpha-D-ribose 1-diphosphate: step 7/9. In Bacteroides fragilis (strain YCH46), this protein is Histidinol-phosphate aminotransferase.